The sequence spans 433 residues: Alpha-(1,3)-fucosyltransferase 4 (433 aa).

At 1–52 (MAPARQELQHESRCRPSRTVDAWRAAVATRGRHMETPGYRRRTRCGGWGLPR) the chain is on the cytoplasmic side. A helical; Signal-anchor for type II membrane protein transmembrane segment spans residues 53–74 (SVSSLAAVGLLCTALTTFICWG). The Lumenal portion of the chain corresponds to 75–433 (QLPPLPWASP…IHNLADWFQR (359 aa)). Residues Asn-117 and Asn-218 are each glycosylated (N-linked (GlcNAc...) asparagine).

Belongs to the glycosyltransferase 10 family. In terms of tissue distribution, highest expression in stomach and colon. It is also expressed in the lung, testis, uterus, small intestine and to a lesser extent in spleen, and ovary. Present in trace amounts in brain, thymus, heart, smooth muscle, kidney and bone marrow. Not found in liver, salivary gland and pancreas.

The protein localises to the golgi apparatus. The protein resides in the golgi stack membrane. It catalyses the reaction a beta-D-galactosyl-(1-&gt;4)-N-acetyl-beta-D-glucosaminyl derivative + GDP-beta-L-fucose = a beta-D-galactosyl-(1-&gt;4)-[alpha-L-fucosyl-(1-&gt;3)]-N-acetyl-beta-D-glucosaminyl derivative + GDP + H(+). It carries out the reaction an N-acetyl-alpha-neuraminyl-(2-&gt;3)-beta-D-galactosyl-(1-&gt;4)-N-acetyl-beta-D-glucosaminyl derivative + GDP-beta-L-fucose = an alpha-Neu5Ac-(2-&gt;3)-beta-D-Gal-(1-&gt;4)-[alpha-L-Fuc-(1-&gt;3)]-beta-D-GlcNAc derivative + GDP + H(+). The enzyme catalyses an alpha-Neu5Ac-(2-&gt;3)-beta-D-Gal-(1-&gt;4)-beta-D-GlcNAc-(1-&gt;3)-beta-D-Gal-(1-&gt;4)-beta-D-GlcNAc derivative + GDP-beta-L-fucose = an alpha-Neu5Ac-(2-&gt;3)-beta-D-Gal-(1-&gt;4)-beta-D-GlcNAc-(1-&gt;3)-beta-D-Gal-(1-&gt;4)-[alpha-L-Fuc-(1-&gt;3)]-beta-D-GlcNAc derivative + GDP + H(+). The catalysed reaction is an alpha-Neu5Ac-(2-&gt;3)-beta-D-Gal-(1-&gt;4)-beta-D-GlcNAc6S derivative + GDP-beta-L-fucose = an alpha-Neu5Ac-(2-&gt;3)-beta-D-Gal-(1-&gt;4)-[alpha-L-Fuc-(1-&gt;3)]-beta-D-GlcNAc6S derivative + GDP + H(+). It participates in protein modification; protein glycosylation. Its function is as follows. Catalyzes alpha(1-&gt;3) linkage of fucosyl moiety transferred from GDP-beta-L-fucose to N-acetyl glucosamine (GlcNAc) within type 2 lactosamine (LacNAc, Gal-beta(1-&gt;4)GlcNAc) glycan attached to N- or O-linked glycoproteins. Robustly fucosylates nonsialylated distal LacNAc unit of the polylactosamine chain to form Lewis X antigen (CD15), a glycan determinant known to mediate important cellular functions in development and immunity. Fucosylates with lower efficiency sialylated LacNAc acceptors to form sialyl Lewis X and 6-sulfo sialyl Lewis X determinants that serve as recognition epitopes for C-type lectins. Together with FUT7 contributes to SELE, SELL and SELP selectin ligand biosynthesis and selectin-dependent lymphocyte homing, leukocyte migration and blood leukocyte homeostasis. In a cell type specific manner, may also fucosylate the internal LacNAc unit of the polylactosamine chain to form VIM-2 antigen that serves as recognition epitope for SELE. This is Alpha-(1,3)-fucosyltransferase 4 (Fut4) from Mus musculus (Mouse).